Reading from the N-terminus, the 69-residue chain is Protein transport protein Sec61 subunit gamma-3 (69 aa).

M1 is modified (N-acetylmethionine). Residues 1 to 32 (MEAIDSAIDPLRDFAKSSVRLVQRCHKPDRKE) lie on the Cytoplasmic side of the membrane. Residues 33–61 (FTKVAVRTAIGFVVMGFVGFFVKLVFIPI) form a helical membrane-spanning segment. Residues 62 to 69 (NNIIVGSS) lie on the Extracellular side of the membrane.

This sequence belongs to the SecE/SEC61-gamma family. Heterotrimeric complex composed of SEC61-alpha, SEC61-beta and SEC61-gamma.

It localises to the endoplasmic reticulum membrane. Its function is as follows. Necessary for protein translocation in the endoplasmic reticulum. The sequence is that of Protein transport protein Sec61 subunit gamma-3 (SEC61G3) from Arabidopsis thaliana (Mouse-ear cress).